A 275-amino-acid polypeptide reads, in one-letter code: ATP synthase subunit delta (275 aa).

The protein belongs to the ATPase delta chain family. In terms of assembly, F-type ATPases have 2 components, F(1) - the catalytic core - and F(0) - the membrane proton channel. F(1) has five subunits: alpha(3), beta(3), gamma(1), delta(1), epsilon(1). F(0) has three main subunits: a(1), b(2) and c(10-14). The alpha and beta chains form an alternating ring which encloses part of the gamma chain. F(1) is attached to F(0) by a central stalk formed by the gamma and epsilon chains, while a peripheral stalk is formed by the delta and b chains.

The protein resides in the cell membrane. F(1)F(0) ATP synthase produces ATP from ADP in the presence of a proton or sodium gradient. F-type ATPases consist of two structural domains, F(1) containing the extramembraneous catalytic core and F(0) containing the membrane proton channel, linked together by a central stalk and a peripheral stalk. During catalysis, ATP synthesis in the catalytic domain of F(1) is coupled via a rotary mechanism of the central stalk subunits to proton translocation. In terms of biological role, this protein is part of the stalk that links CF(0) to CF(1). It either transmits conformational changes from CF(0) to CF(1) or is implicated in proton conduction. The protein is ATP synthase subunit delta of Nocardioides sp. (strain ATCC BAA-499 / JS614).